Here is a 744-residue protein sequence, read N- to C-terminus: 1,4-alpha-glucan branching enzyme GlgB (744 aa).

The interval 1-23 (MSGPEDPADRRHGEVPAPRRDIP) is disordered. Residues 7-23 (PADRRHGEVPAPRRDIP) show a composition bias toward basic and acidic residues. D424 serves as the catalytic Nucleophile. E476 serves as the catalytic Proton donor.

This sequence belongs to the glycosyl hydrolase 13 family. GlgB subfamily. As to quaternary structure, monomer.

It catalyses the reaction Transfers a segment of a (1-&gt;4)-alpha-D-glucan chain to a primary hydroxy group in a similar glucan chain.. It participates in glycan biosynthesis; glycogen biosynthesis. Catalyzes the formation of the alpha-1,6-glucosidic linkages in glycogen by scission of a 1,4-alpha-linked oligosaccharide from growing alpha-1,4-glucan chains and the subsequent attachment of the oligosaccharide to the alpha-1,6 position. In Nocardia farcinica (strain IFM 10152), this protein is 1,4-alpha-glucan branching enzyme GlgB.